Here is a 255-residue protein sequence, read N- to C-terminus: Triosephosphate isomerase (255 aa).

9–11 serves as a coordination point for substrate; that stretch reads NWK. The active-site Electrophile is the histidine 95. Glutamate 167 functions as the Proton acceptor in the catalytic mechanism. Substrate contacts are provided by residues glycine 173, serine 212, and 233–234; that span reads GG.

It belongs to the triosephosphate isomerase family. In terms of assembly, homodimer.

It localises to the cytoplasm. It carries out the reaction D-glyceraldehyde 3-phosphate = dihydroxyacetone phosphate. The protein operates within carbohydrate biosynthesis; gluconeogenesis. It functions in the pathway carbohydrate degradation; glycolysis; D-glyceraldehyde 3-phosphate from glycerone phosphate: step 1/1. Involved in the gluconeogenesis. Catalyzes stereospecifically the conversion of dihydroxyacetone phosphate (DHAP) to D-glyceraldehyde-3-phosphate (G3P). This chain is Triosephosphate isomerase, found in Pectobacterium atrosepticum (strain SCRI 1043 / ATCC BAA-672) (Erwinia carotovora subsp. atroseptica).